The sequence spans 281 residues: Ribosomal protein L11 methyltransferase (281 aa).

The S-adenosyl-L-methionine site is built by T131, G152, D174, and N217.

Belongs to the methyltransferase superfamily. PrmA family.

The protein resides in the cytoplasm. It carries out the reaction L-lysyl-[protein] + 3 S-adenosyl-L-methionine = N(6),N(6),N(6)-trimethyl-L-lysyl-[protein] + 3 S-adenosyl-L-homocysteine + 3 H(+). Its function is as follows. Methylates ribosomal protein L11. This is Ribosomal protein L11 methyltransferase from Phocaeicola vulgatus (strain ATCC 8482 / DSM 1447 / JCM 5826 / CCUG 4940 / NBRC 14291 / NCTC 11154) (Bacteroides vulgatus).